The primary structure comprises 625 residues: Chaperone protein HtpG (625 aa).

Positions 1-341 (MGKRKFKAES…SEDLSLNISR (341 aa)) are a; substrate-binding. The b stretch occupies residues 342–551 (EMLQHDRQLK…DGEISLEMEK (210 aa)). A c region spans residues 552-625 (IINAMPDDQQ…FTNDICKVMV (74 aa)).

This sequence belongs to the heat shock protein 90 family. Homodimer.

The protein resides in the cytoplasm. Functionally, molecular chaperone. Has ATPase activity. This chain is Chaperone protein HtpG, found in Oceanobacillus iheyensis (strain DSM 14371 / CIP 107618 / JCM 11309 / KCTC 3954 / HTE831).